The sequence spans 146 residues: SMR1 protein (146 aa).

A signal peptide spans 1 to 22 (MKSLYLIFGLWILLACFQSGEG). Disordered regions lie at residues 23-43 (VRGP…TLPH) and 99-146 (TAPD…GGGK). The segment covering 109–139 (PPTQLHSTEQANTKTDAKISNTTATTQNSTD) has biased composition (polar residues). Residues Asn-129 and Asn-136 are each glycosylated (N-linked (GlcNAc...) asparagine).

Post-translationally, several O-linked glycosylation sites might be present in the C-terminal part. Expressed predominantly in the acinar cells of the submandibular gland and to lesser extent in the prostate.

The protein localises to the secreted. In terms of biological role, sialorphin may be involved in the modulation of mineral balance between at least four systems: kidney, bone, tooth and circulation. Submandibular gland peptide T is able to directly or indirectly down-regulate cardiovascular depression induced by septic shock (endotoxin stimuli), or anaphylactic challenge (nematode antigen sensitization). Its function is as follows. Sialorphin is an endogenous inhibitor of neprilysin. Inhibits the breakdown of Met-enkephalin and substance P in isolated tissue from the dorsal zone of the rat spinal cord. Has an analgesic effect when administered to rats by intravenous injection. This chain is SMR1 protein (Vcsa1), found in Rattus norvegicus (Rat).